Reading from the N-terminus, the 414-residue chain is Esterase FrsA (414 aa).

This sequence belongs to the FrsA family.

The catalysed reaction is a carboxylic ester + H2O = an alcohol + a carboxylate + H(+). Catalyzes the hydrolysis of esters. This is Esterase FrsA from Escherichia coli O127:H6 (strain E2348/69 / EPEC).